The following is a 608-amino-acid chain: MQFQTEVNQLLQLMIHSLYSNKEIFLRELISNASDALDKLNFLSVSDDKYKSLKFEPKIEIKIDKDKKTLSISDNGIGMDKDDLINNLGTIAKSGTKSFLENLSGDAKKDSQLIGQFGVGFYSAFMVASKIEVLSKKALDDKAYLWSSDANGYEINDASKEEQGTSITLYLKDDEFANTYKIESIIEKYSNHIQFPIFMEKEEFTPAKEGEEEGKTELKISQINKANALWRMQKSSLKAEDYERFYEQNFHDSNKPLLYLHTKSEGKLEYNSLFFIPQNAPFDLFRVDYQSGLKLYVKRVFISDDDKELLPTYLRFVRGIIDVEDLPLNVSREILQENQILKGVKEASVKKILGELEKLKNNDKEKYLSFFKTFGKVLKEGLYGFGGEKDSLLKLMLYKSTKGENLRSLEEYKNDLQGEQKEIFYIAGNNESLLRTSPLLEEYKQKNIEVLLMDDEIDSLVTPMLEFEGLKFIAINQVEDKNELSDEEKNTFAPLVAKFKELLKDQVEDVRLTSRLKDSPSCIVYDKNKPDFAMQQLLKQMGQEQNFKPILEINPKHAIFTGLKNNESFSADIATLVLNMAKLSEGMGVDNPAEFNASLTKIINKAFS.

Residues 1-332 form an a; substrate-binding region; the sequence is MQFQTEVNQL…VEDLPLNVSR (332 aa). The b stretch occupies residues 333–536; it reads EILQENQILK…KNKPDFAMQQ (204 aa). The c stretch occupies residues 537 to 608; the sequence is LLKQMGQEQN…LTKIINKAFS (72 aa).

Belongs to the heat shock protein 90 family. In terms of assembly, homodimer.

Its subcellular location is the cytoplasm. Its function is as follows. Molecular chaperone. Has ATPase activity. This is Chaperone protein HtpG from Campylobacter jejuni (strain RM1221).